Here is a 73-residue protein sequence, read N- to C-terminus: MKYRLYSEGLSISNDLNSIIGQQSTMDTDIEIDEDDIMELLNILTELGCDVDFDENFSDIADDILESLIEQDV.

This sequence belongs to the orthopoxvirus OPG058 family.

The polypeptide is Protein OPG058 (OPG058) (Vaccinia virus (strain Copenhagen) (VACV)).